The sequence spans 422 residues: Protein FAM53B (422 aa).

A phosphoserine mark is found at Ser-119, Ser-168, Ser-170, Ser-180, Ser-213, and Ser-269. Disordered stretches follow at residues 193-225 and 243-269; these read GQPC…GRLD and CPPS…RSRS. Positions 244–269 are enriched in low complexity; sequence PPSANSTPASTPELARRSSGLARSRS. The Nuclear localization signal motif lies at 282–285; the sequence is KRRR. Phosphoserine is present on residues Ser-335 and Ser-344.

Belongs to the FAM53 family. As to quaternary structure, interacts with CTNNB1.

The protein localises to the nucleus. Acts as a regulator of Wnt signaling pathway by regulating beta-catenin (CTNNB1) nuclear localization. The protein is Protein FAM53B of Mus musculus (Mouse).